Here is a 511-residue protein sequence, read N- to C-terminus: MALRAMRGIVNGAAPELPVPTSGPLAGSREQALAVSRNYLSQPRLTYKTVSGVNGPLVILDHVKFPRYAEIVHLTLPDGTKRSGQVLEVSGSKAVVQVFEGTSGIDAKKTSCEFTGDILRTPVSEDMLGRVFNGSGKPIDRGPVVLAEDFLDIMGQPINPQCRIYPEEMIQTGISAIDGMNSIARGQKIPIFSAAGLPHNEIAAQICRQAGLVKKSKDVVDYSEENFAIVFAAMGVNMETARFFKSDFEENGSMDNVCLFLNLANDPTIERIITPRLALTTAEFLAYQCEKHVLVILTDMSSYAEALREVSAAREEVPGRRGFPGYMYTDLATIYERAGRVEGRNGSITQIPILTMPNDDITHPIPDLTGYITEGQIYVDRQLHNRQIYPPINVLPSLSRLMKSAIGEGMTRKDHADVSNQLYACYAIGKDVQAMKAVVGEEALTSDDLLYLEFLQKFERNFIAQGPYENRTVYETLDIGWQLLRIFPKEMLKRIPQSTLSEFYPRDSAKH.

Arg-400 contributes to the ATP binding site.

This sequence belongs to the ATPase alpha/beta chains family. As to quaternary structure, V-ATPase is a heteromultimeric enzyme made up of two complexes: the ATP-hydrolytic V1 complex and the proton translocation V0 complex. The V1 complex consists of three catalytic AB heterodimers that form a heterohexamer, three peripheral stalks each consisting of EG heterodimers, one central rotor including subunits D and F, and the regulatory subunits C and H. The proton translocation complex V0 consists of the proton transport subunit a, a ring of proteolipid subunits c9c'', rotary subunit d, subunits e and f, and the accessory subunits ATP6AP1/Ac45 and ATP6AP2/PRR. As to expression, expressed in brain (at protein level). Expressed in all tissues tested, but highest in brain and in adrenal medulla.

It is found in the apical cell membrane. The protein localises to the melanosome. The protein resides in the cytoplasm. It localises to the cytoplasmic vesicle. Its subcellular location is the clathrin-coated vesicle membrane. It is found in the secretory vesicle. The protein localises to the synaptic vesicle membrane. Functionally, non-catalytic subunit of the V1 complex of vacuolar(H+)-ATPase (V-ATPase), a multisubunit enzyme composed of a peripheral complex (V1) that hydrolyzes ATP and a membrane integral complex (V0) that translocates protons. V-ATPase is responsible for acidifying and maintaining the pH of intracellular compartments and in some cell types, is targeted to the plasma membrane, where it is responsible for acidifying the extracellular environment. In renal intercalated cells, can partially compensate the lack of ATP6V1B1 and mediate secretion of protons (H+) into the urine under base-line conditions but not in conditions of acid load. The polypeptide is V-type proton ATPase subunit B, brain isoform (ATP6V1B2) (Bos taurus (Bovine)).